Reading from the N-terminus, the 237-residue chain is Riboflavin kinase (237 aa).

Residues 1–23 (MSLPNPDNRPLLIGPPTGPEAPF) are disordered. 2 residues coordinate Mg(2+): T46 and N48. A disordered region spans residues 82–126 (VLYQKPPTSEPVMMDPVQQQQQQQQQQRNQQQQQEGGVGSAQQEK). Low complexity predominate over residues 99 to 115 (QQQQQQQQQQRNQQQQQ). The active-site Nucleophile is the E158.

This sequence belongs to the flavokinase family. Requires Zn(2+) as cofactor. Mg(2+) serves as cofactor.

The catalysed reaction is riboflavin + ATP = FMN + ADP + H(+). It participates in cofactor biosynthesis; FMN biosynthesis; FMN from riboflavin (ATP route): step 1/1. Catalyzes the phosphorylation of riboflavin (vitamin B2) to form flavin mononucleotide (FMN) coenzyme. This is Riboflavin kinase (fmn1) from Neurospora crassa (strain ATCC 24698 / 74-OR23-1A / CBS 708.71 / DSM 1257 / FGSC 987).